The sequence spans 61 residues: Putative defensin-like protein 72 (61 aa).

Intrachain disulfides connect C21-C59, C25-C48, C34-C57, and C38-C58.

It belongs to the DEFL family.

The chain is Putative defensin-like protein 72 from Arabidopsis thaliana (Mouse-ear cress).